We begin with the raw amino-acid sequence, 325 residues long: Peroxidase 45 (325 aa).

The signal sequence occupies residues 1 to 25; sequence MEKNTSQTIFSNFFLLLLLSSCVSA. 4 disulfide bridges follow: cysteine 36-cysteine 115, cysteine 69-cysteine 74, cysteine 121-cysteine 321, and cysteine 200-cysteine 232. Histidine 67 serves as the catalytic Proton acceptor. Residues aspartate 68, valine 71, glycine 73, aspartate 75, and serine 77 each coordinate Ca(2+). Proline 163 serves as a coordination point for substrate. Heme b is bound at residue histidine 193. Residue threonine 194 coordinates Ca(2+). Ca(2+) contacts are provided by aspartate 245, serine 248, and aspartate 253.

This sequence belongs to the peroxidase family. Classical plant (class III) peroxidase subfamily. It depends on heme b as a cofactor. The cofactor is Ca(2+). In terms of tissue distribution, slightly expressed in roots.

The protein resides in the secreted. It catalyses the reaction 2 a phenolic donor + H2O2 = 2 a phenolic radical donor + 2 H2O. Functionally, removal of H(2)O(2), oxidation of toxic reductants, biosynthesis and degradation of lignin, suberization, auxin catabolism, response to environmental stresses such as wounding, pathogen attack and oxidative stress. These functions might be dependent on each isozyme/isoform in each plant tissue. The polypeptide is Peroxidase 45 (PER45) (Arabidopsis thaliana (Mouse-ear cress)).